The chain runs to 327 residues: Endochitinase CH5B (327 aa).

Positions 1–26 are cleaved as a signal peptide; it reads MKKNRMMIMICSVGVVWMLLVGGSYG. Positions 27 to 67 constitute a Chitin-binding type-1 domain; sequence EQCGRQAGGALCPGGNCCSQFGWCGSTTDYCGKDCQSQCGG. 7 disulfide bridges follow: Cys29–Cys44, Cys38–Cys50, Cys43–Cys57, Cys61–Cys65, Cys96–Cys158, Cys169–Cys177, and Cys276–Cys308. Glu140 serves as the catalytic Proton donor. The propeptide at 317-327 is removed in mature form; it reads SLFLSDLVTSQ.

This sequence belongs to the glycosyl hydrolase 19 family. Chitinase class I subfamily.

It is found in the vacuole. It carries out the reaction Random endo-hydrolysis of N-acetyl-beta-D-glucosaminide (1-&gt;4)-beta-linkages in chitin and chitodextrins.. Defense against chitin-containing fungal pathogens. This is Endochitinase CH5B from Phaseolus vulgaris (Kidney bean).